The primary structure comprises 302 residues: Sulfate adenylyltransferase subunit 2 (302 aa).

The protein belongs to the PAPS reductase family. CysD subfamily. In terms of assembly, heterodimer composed of CysD, the smaller subunit, and CysN.

It catalyses the reaction sulfate + ATP + H(+) = adenosine 5'-phosphosulfate + diphosphate. The protein operates within sulfur metabolism; hydrogen sulfide biosynthesis; sulfite from sulfate: step 1/3. Functionally, with CysN forms the ATP sulfurylase (ATPS) that catalyzes the adenylation of sulfate producing adenosine 5'-phosphosulfate (APS) and diphosphate, the first enzymatic step in sulfur assimilation pathway. APS synthesis involves the formation of a high-energy phosphoric-sulfuric acid anhydride bond driven by GTP hydrolysis by CysN coupled to ATP hydrolysis by CysD. This Salmonella arizonae (strain ATCC BAA-731 / CDC346-86 / RSK2980) protein is Sulfate adenylyltransferase subunit 2.